A 209-amino-acid chain; its full sequence is Imidazole glycerol phosphate synthase subunit HisH (209 aa).

In terms of domain architecture, Glutamine amidotransferase type-1 spans 1-205 (MIAIIDYGMG…KGVVESWKSS (205 aa)). The active-site Nucleophile is Cys79. Active-site residues include His180 and Glu182.

Heterodimer of HisH and HisF.

The protein resides in the cytoplasm. The catalysed reaction is 5-[(5-phospho-1-deoxy-D-ribulos-1-ylimino)methylamino]-1-(5-phospho-beta-D-ribosyl)imidazole-4-carboxamide + L-glutamine = D-erythro-1-(imidazol-4-yl)glycerol 3-phosphate + 5-amino-1-(5-phospho-beta-D-ribosyl)imidazole-4-carboxamide + L-glutamate + H(+). It catalyses the reaction L-glutamine + H2O = L-glutamate + NH4(+). The protein operates within amino-acid biosynthesis; L-histidine biosynthesis; L-histidine from 5-phospho-alpha-D-ribose 1-diphosphate: step 5/9. Its function is as follows. IGPS catalyzes the conversion of PRFAR and glutamine to IGP, AICAR and glutamate. The HisH subunit catalyzes the hydrolysis of glutamine to glutamate and ammonia as part of the synthesis of IGP and AICAR. The resulting ammonia molecule is channeled to the active site of HisF. The chain is Imidazole glycerol phosphate synthase subunit HisH from Bacillus cereus (strain ATCC 10987 / NRS 248).